Here is a 2157-residue protein sequence, read N- to C-terminus: Polyketide synthase 2 (2157 aa).

An N-terminal acylcarrier protein transacylase domain (SAT) region spans residues 7-244 (FIFGDQTGGF…IPIPIWAPYH (238 aa)). The Ketosynthase family 3 (KS3) domain maps to 374–807 (DSKIAIIGMS…GGNSALLLED (434 aa)). Active-site for beta-ketoacyl synthase activity residues include Cys546, His681, and His723. Residues 908–1213 (GFVFSGQGAQ…ASLHRKDDGW (306 aa)) form a malonyl-CoA:ACP transacylase (MAT) domain region. The active-site For acyl/malonyl transferase activity is the Ser998. The interval 1290-1605 (TSSVQKIIRQ…RSLLNKVLPP (316 aa)) is product template (PT) domain. The tract at residues 1294 to 1428 (QKIIRQTDGP…CLLRFADPTS (135 aa)) is N-terminal hotdog fold. In terms of domain architecture, PKS/mFAS DH spans 1294 to 1600 (QKIIRQTDGP…FLGMSRSLLN (307 aa)). His1327 functions as the Proton acceptor; for dehydratase activity in the catalytic mechanism. The interval 1455–1600 (TDSLLSRGIV…FLGMSRSLLN (146 aa)) is C-terminal hotdog fold. Asp1514 serves as the catalytic Proton donor; for dehydratase activity. Residues 1626–1652 (AASAKDTERRPLDIPTRAQRQPSSAQT) form a disordered region. Residues 1643-1652 (AQRQPSSAQT) are compositionally biased toward polar residues. The Carrier 1 domain maps to 1649–1726 (SAQTGTMGRI…ELKAFLGADQ (78 aa)). O-(pantetheine 4'-phosphoryl)serine is present on Ser1686. Residues 1733–1762 (ACESSNGQHTPQTSDKGSGTLAVQKTDDDT) are disordered. Polar residues predominate over residues 1735–1755 (ESSNGQHTPQTSDKGSGTLAV). A Carrier 2 domain is found at 1765–1839 (DMTLNRVCAI…SLQKALCGSE (75 aa)). O-(pantetheine 4'-phosphoryl)serine is present on Ser1799. The disordered stretch occupies residues 1840–1859 (AASNGAPEANETTPSSHRLE). The segment at 1875–2151 (ASPPHATSIL…MIEMGNLIGE (277 aa)) is thioesterase (TE) domain. Ser1981 (for thioesterase activity) is an active-site residue.

Its function is as follows. Polyketide synthase; part of the Pks2 gene cluster that mediates the formation of infectious structures (appressoria), enabling these fungi to kill insects faster. The product of the Pks2 gene cluster is different from the one of Pks1 and has still not been identified. The sequence is that of Polyketide synthase 2 from Metarhizium robertsii (strain ARSEF 23 / ATCC MYA-3075) (Metarhizium anisopliae (strain ARSEF 23)).